We begin with the raw amino-acid sequence, 95 residues long: Aspartyl/glutamyl-tRNA(Asn/Gln) amidotransferase subunit C (95 aa).

It belongs to the GatC family. In terms of assembly, heterotrimer of A, B and C subunits.

It carries out the reaction L-glutamyl-tRNA(Gln) + L-glutamine + ATP + H2O = L-glutaminyl-tRNA(Gln) + L-glutamate + ADP + phosphate + H(+). The catalysed reaction is L-aspartyl-tRNA(Asn) + L-glutamine + ATP + H2O = L-asparaginyl-tRNA(Asn) + L-glutamate + ADP + phosphate + 2 H(+). In terms of biological role, allows the formation of correctly charged Asn-tRNA(Asn) or Gln-tRNA(Gln) through the transamidation of misacylated Asp-tRNA(Asn) or Glu-tRNA(Gln) in organisms which lack either or both of asparaginyl-tRNA or glutaminyl-tRNA synthetases. The reaction takes place in the presence of glutamine and ATP through an activated phospho-Asp-tRNA(Asn) or phospho-Glu-tRNA(Gln). This Pseudomonas syringae pv. syringae (strain B728a) protein is Aspartyl/glutamyl-tRNA(Asn/Gln) amidotransferase subunit C.